Consider the following 388-residue polypeptide: Fibrinogen- and Ig-binding protein (388 aa).

The N-terminal stretch at 1–41 is a signal peptide; that stretch reads MSKTNPNKLYSLRKLKTGTASVAVDLTVLGTGLANTTDVKA. D repeat units lie at residues 288–293, 294–299, 302–307, and 309–314; these read EKLEAE, AKALKE, AKQAEE, and AKLKAD. The segment at 308 to 362 is disordered; the sequence is LAKLKADKASGAQKPDTKPGNKEVPTRPSQTRTNTNKAPMAQTKRQLPSTGEETT. Over residues 322–332 the composition is skewed to basic and acidic residues; it reads PDTKPGNKEVP. The segment covering 334 to 362 has biased composition (polar residues); sequence RPSQTRTNTNKAPMAQTKRQLPSTGEETT. An LPXTG sorting signal motif is present at residues 354–358; it reads LPSTG. Residue Thr-357 is modified to Pentaglycyl murein peptidoglycan amidated threonine. Positions 358-388 are cleaved as a propeptide — removed by sortase; that stretch reads GEETTNPFFTAAALTVIASAGVLALKRKEEN.

It localises to the secreted. The protein localises to the cell wall. Functionally, binds IgG molecules of the Ig1, Ig2 and Ig4 subclasses, and also binds fibrinogen. The protein is Fibrinogen- and Ig-binding protein (mrp4) of Streptococcus pyogenes.